The sequence spans 527 residues: Zinc finger imprinted 2 (527 aa).

Residues 1–16 (MYQPEDDNNSDVTSDD) are compositionally biased toward acidic residues. The tract at residues 1-104 (MYQPEDDNNS…SRSQDAESYQ (104 aa)) is disordered. Composition is skewed to basic and acidic residues over residues 17 to 26 (DMTRNRRESS), 35 to 56 (SGDRDWDRRGRSRDMEPRDRWS), and 80 to 99 (FEMDREDDRDSRAYESRSQD). The KRAB domain occupies 176–246 (VTFEDVLVDF…ETDSRHTVIC (71 aa)). The disordered stretch occupies residues 247–322 (QGESHDDPLE…GICTSPQSAS (76 aa)). The span at 259–275 (QGNQEKLLTPITMNDPK) shows a compositional bias: polar residues. Basic and acidic residues predominate over residues 297 to 307 (QSKDPLGKDPQ). C2H2-type zinc fingers lie at residues 328–350 (NRCEFCKRTFSTQVALRRHERIH), 356–378 (YECKQCAEAFYLMPHLNRHQKTH), 412–434 (FECFQCGKAFLQNVHLLQHLKAH), 466–488 (CQCCDCGRVFSRNSYLIQHYRTH), and 494–516 (YQCQLCGKCFGRPSYLTQHYQLH).

Belongs to the krueppel C2H2-type zinc-finger protein family. In terms of tissue distribution, highest levels of expression in adult testis; modest levels in fetal kidney and brain.

It is found in the nucleus. In terms of biological role, may be involved in transcriptional regulation. This is Zinc finger imprinted 2 (ZIM2) from Homo sapiens (Human).